The following is an 880-amino-acid chain: Arginine metabolism regulation protein II (880 aa).

Residues Cys21 to Cys48 constitute a DNA-binding region (zn(2)-C6 fungal-type).

In terms of assembly, interacts with ARG80 and MCM1.

It localises to the cytoplasm. It is found in the nucleus. Functionally, with ARG80, ARG82 and MCM1, coordinates the expression of arginine anabolic and catabolic genes in response to arginine. The sequence is that of Arginine metabolism regulation protein II (ARG81) from Saccharomyces cerevisiae (strain ATCC 204508 / S288c) (Baker's yeast).